The chain runs to 208 residues: Cell death-inducing p53-target protein 1 (208 aa).

Pro residues-rich tracts occupy residues 1–13 (MSSE…PGGP) and 36–67 (MQPP…PGFI). The segment at 1–71 (MSSEPPPPYP…PQPGFIPPHM (71 aa)) is disordered. The LITAF domain maps to 122–206 (ATTVTVLQGE…CKAYIYTYKR (85 aa)). Residues C142 and C145 each contribute to the Zn(2+) site. The membrane-binding amphipathic helix stretch occupies residues 164 to 184 (LGFFCCFMGCDLGCCLIPCLI). Positions 194 and 197 each coordinate Zn(2+).

It belongs to the CDIP1/LITAF family. Highly expressed in brain. Expressed at lower level in heart, skeletal muscle, kidney, pancreas and liver. Weakly or not expressed in placenta and lung.

The protein localises to the late endosome membrane. Its subcellular location is the lysosome membrane. Acts as an important p53/TP53-apoptotic effector. Regulates TNF-alpha-mediated apoptosis in a p53/TP53-dependent manner. This is Cell death-inducing p53-target protein 1 (CDIP1) from Homo sapiens (Human).